We begin with the raw amino-acid sequence, 198 residues long: MKINSEVALVGNQIILVPYKEKHVPRYHEWMQSPELLEQTASERLMLQQEYDMQQSWLNDENKCTFIVLDKQKWNDNGNNEIESMAGDVNLFFNDPDDLHVAEIEIMIAEPSSRGRGLGKEALLIMMSYGISKLHVNRFTAKIGHDNEPSLSLFNKLGFTKISESEVFKEVTLKFDSNNFTNLTADVTELHYPIKTQA.

In terms of domain architecture, N-acetyltransferase spans 14 to 186 (IILVPYKEKH…SNNFTNLTAD (173 aa)).

It belongs to the acetyltransferase family. GNAT subfamily.

The sequence is that of N-acetyltransferase 9-like protein (nat9) from Nematostella vectensis (Starlet sea anemone).